Here is a 240-residue protein sequence, read N- to C-terminus: Uridylate kinase (240 aa).

ATP is bound at residue 13–16 (KASG). The tract at residues 21–26 (GSQGFG) is involved in allosteric activation by GTP. UMP is bound at residue Gly-55. Positions 56 and 60 each coordinate ATP. UMP contacts are provided by residues Asp-75 and 136 to 143 (TGNPFFTT). Residues Thr-163, Gln-164, Tyr-169, and Asp-172 each coordinate ATP.

Belongs to the UMP kinase family. In terms of assembly, homohexamer.

It is found in the cytoplasm. The catalysed reaction is UMP + ATP = UDP + ADP. The protein operates within pyrimidine metabolism; CTP biosynthesis via de novo pathway; UDP from UMP (UMPK route): step 1/1. With respect to regulation, allosterically activated by GTP. Inhibited by UTP. Functionally, catalyzes the reversible phosphorylation of UMP to UDP. This is Uridylate kinase from Brucella melitensis biotype 1 (strain ATCC 23456 / CCUG 17765 / NCTC 10094 / 16M).